Here is a 320-residue protein sequence, read N- to C-terminus: o-succinylbenzoate synthase (320 aa).

Residue Lys-133 is the Proton donor of the active site. Mg(2+) contacts are provided by Asp-161, Glu-190, and Asp-213. Lys-235 functions as the Proton acceptor in the catalytic mechanism.

It belongs to the mandelate racemase/muconate lactonizing enzyme family. MenC type 1 subfamily. A divalent metal cation serves as cofactor.

It catalyses the reaction (1R,6R)-6-hydroxy-2-succinyl-cyclohexa-2,4-diene-1-carboxylate = 2-succinylbenzoate + H2O. Its pathway is quinol/quinone metabolism; 1,4-dihydroxy-2-naphthoate biosynthesis; 1,4-dihydroxy-2-naphthoate from chorismate: step 4/7. It functions in the pathway quinol/quinone metabolism; menaquinone biosynthesis. Converts 2-succinyl-6-hydroxy-2,4-cyclohexadiene-1-carboxylate (SHCHC) to 2-succinylbenzoate (OSB). The sequence is that of o-succinylbenzoate synthase from Escherichia coli O45:K1 (strain S88 / ExPEC).